The following is a 94-amino-acid chain: Small ribosomal subunit protein uS19 (94 aa).

It belongs to the universal ribosomal protein uS19 family.

Protein S19 forms a complex with S13 that binds strongly to the 16S ribosomal RNA. The polypeptide is Small ribosomal subunit protein uS19 (Caldicellulosiruptor saccharolyticus (strain ATCC 43494 / DSM 8903 / Tp8T 6331)).